The primary structure comprises 131 residues: Large ribosomal subunit protein bL17 (131 aa).

It belongs to the bacterial ribosomal protein bL17 family. As to quaternary structure, part of the 50S ribosomal subunit. Contacts protein L32.

The protein is Large ribosomal subunit protein bL17 of Thermotoga neapolitana (strain ATCC 49049 / DSM 4359 / NBRC 107923 / NS-E).